The following is a 338-amino-acid chain: MGPPLSPRESARFVAENSRDVLVDHEGVRRAAELLLPAAAAWRVEQWKSLHELNPRGADEAALGWVFLVDSLNFSFWAEREDSKCAVRYGGTPYTGYWALCAAVNRALDQGIPITSASYYATVSLEQVRDIFRSDTAVPMPLMEERHRILNETGKILLEKFGGSFLNCVQKSGRSAQKLMQLIVENFPSYRDEAEFEGKRIAFYKRAQILVADTWSVLEGKGDGCFEDISSITMFADYRLPQILVYLGALKYSDELLKKLLKGEMLLNGDKQEVEIRGCSIWCVELIRDRLLELLEKGENSPVEINSVLLDYHLWDYAREHREDMKGVPFHRTRCIYY.

An N-acetylmethionine modification is found at Met-1. The queuine site is built by His-51, Phe-235, Asp-237, Asp-311, Tyr-312, and Asp-316. Asp-237 (nucleophile or transition state stabilizer) is an active-site residue.

The protein belongs to the QNG1 protein family. Highly expressed in liver.

It carries out the reaction queuosine 5'-phosphate + H2O = queuine + D-ribose 5-phosphate. Its function is as follows. Catalyzes the hydrolysis of queuosine 5'-phosphate, releasing the nucleobase queuine (q). Is required for salvage of queuine from exogenous queuosine (Q) that is imported and then converted to queuosine 5'-phosphate intracellularly. The protein is Queuosine 5'-phosphate N-glycosylase/hydrolase of Mus musculus (Mouse).